A 218-amino-acid polypeptide reads, in one-letter code: Sodium channel regulatory subunit beta-1 (218 aa).

The signal sequence occupies residues M1–C18. Topologically, residues G19 to I157 are extracellular. Intrachain disulfides connect C21/C43 and C40/C121. Residues V22 to A150 enclose the Ig-like C2-type domain. Residues N93, N110, N114, and N135 are each glycosylated (N-linked (GlcNAc...) asparagine). The helical transmembrane segment at V158–I179 threads the bilayer. Over Y180–E218 the chain is Cytoplasmic.

This sequence belongs to the sodium channel auxiliary subunit SCN1B (TC 8.A.17) family. As to quaternary structure, voltage-gated sodium (Nav) channel consists of an ion-conducting pore-forming alpha subunit functional on its own that is regulated by one or more beta subunits. Interacts with SCN1A; regulatory subunit of SCN1A/Nav1.1. Interacts with SCN3A; regulatory subunit of SCN3A/Nav1.3. Interacts with SCN4A; regulatory subunit of SCN4A/Nav1.4. Interacts with SCN5A; regulatory subunit of SCN5A/Nav1.5. Interacts with SCN8A; regulatory subunit of SCN8A/Nav1.6. Interacts with SCN9A; regulatory subunit of SCN9A/Nav1.7. Interacts with SCN10A; regulatory subunit of SCN10A/Nav1.8. Interacts with NFASC. Interacts with TMEM65. As to expression, the overall expression of isoform 1 and isoform 2 is very similar. Isoform 1 is abundantly expressed in skeletal muscle, heart and brain. Isoform 2 is highly expressed in brain and skeletal muscle and present at a very low level in heart, placenta, lung, liver, kidney and pancreas. In brain, isoform 2 is most abundant in the cerebellum, followed by the cerebral cortex and occipital lobe, while isoform 1 levels are higher in the cortex compared to the cerebellum. Isoform 2 is expressed in many regions of the brain, including cerebellar Purkinje cells, cortex pyramidal neurons and many of the neuronal fibers throughout the brain (at protein level). Also detected in dorsal root ganglion, in fibers of the spinal nerve and in cortical neurons and their processes (at protein level).

It localises to the cell membrane. Its subcellular location is the perikaryon. It is found in the cell projection. The protein resides in the axon. The protein localises to the secreted. In terms of biological role, regulatory subunit of multiple voltage-gated sodium (Nav) channels directly mediating the depolarization of excitable membranes. Navs, also called VGSCs (voltage-gated sodium channels) or VDSCs (voltage-dependent sodium channels), operate by switching between closed and open conformations depending on the voltage difference across the membrane. In the open conformation they allow Na(+) ions to selectively pass through the pore, along their electrochemical gradient. The influx of Na+ ions provokes membrane depolarization, initiating the propagation of electrical signals throughout cells and tissues. The accessory beta subunits participate in localization and functional modulation of the Nav channels. Modulates the activity of SCN1A/Nav1.1, SCN2A/Nav1.2, SCN3A/Nav1.3, SCN4A/Nav1.4, SCN5A/Nav1.5, SCN8A/Nav1.6, SCN9A/Nav1.7 and SCN10A/Nav1.8. Cell adhesion molecule that plays a critical role in neuronal migration and pathfinding during brain development. Stimulates neurite outgrowth. Has no regulatory function on the SCN2A sodium channel complex. The protein is Sodium channel regulatory subunit beta-1 of Homo sapiens (Human).